A 282-amino-acid polypeptide reads, in one-letter code: Protein FRG2-like-2 (282 aa).

Basic and acidic residues predominate over residues 1–10 (MGKGNEDPDL). 2 disordered regions span residues 1–96 (MGKG…QENC) and 249–282 (GPGD…LGAP). Polar residues-rich tracts occupy residues 13-31 (SSIQ…SFTE), 58-68 (RQAGSDPNPNK), and 79-94 (GNST…SYQE).

This sequence belongs to the FRG2 family.

It is found in the nucleus. This is Protein FRG2-like-2 (FRG2C) from Homo sapiens (Human).